The primary structure comprises 310 residues: Thioredoxin reductase (310 aa).

An FAD-binding site is contributed by 34–41 (NGMQPGGQ). Cys-135 and Cys-138 are oxidised to a cystine. 281–290 (DVQDKIYRQA) is a binding site for FAD.

Belongs to the class-II pyridine nucleotide-disulfide oxidoreductase family. In terms of assembly, homodimer. Requires FAD as cofactor.

It localises to the cytoplasm. The enzyme catalyses [thioredoxin]-dithiol + NADP(+) = [thioredoxin]-disulfide + NADPH + H(+). In Rickettsia prowazekii (strain Madrid E), this protein is Thioredoxin reductase (trxB).